A 334-amino-acid polypeptide reads, in one-letter code: Protein NlpD/LppB homolog (334 aa).

Residues 89–133 (IFYIVKSKDTMYSIAKNSGYNYHELSKFNSIKKPYKIIIGQKIWM) form the LysM domain.

The protein belongs to the E.coli NlpD/Haemophilus LppB family.

The sequence is that of Protein NlpD/LppB homolog from Buchnera aphidicola subsp. Acyrthosiphon pisum (strain APS) (Acyrthosiphon pisum symbiotic bacterium).